Consider the following 655-residue polypeptide: Archaeal Lon protease (655 aa).

Residues 1–123 (MEENIESVEE…KAEREKRDRS (123 aa)) are Cytoplasmic-facing. 57 to 64 (GEPGTGKS) is an ATP binding site. The helical transmembrane segment at 124–144 (RSIMFVIFSVVLLGIIAAIVL) threads the bilayer. Arg145 is a topological domain (extracellular). The chain crosses the membrane as a helical span at residues 146 to 166 (SITLIFFAIMAAAFLYMAMAF). Topologically, residues 167–655 (NPVIRNEKAM…ASTRAGQNVA (489 aa)) are cytoplasmic. The Lon proteolytic domain maps to 433–618 (GSVVGMVNGL…EDVLKVALVN (186 aa)). Catalysis depends on residues Ser525 and Lys568.

This sequence belongs to the peptidase S16 family. Archaeal LonB subfamily. In terms of assembly, homohexamer. Organized in a ring with a central cavity.

The protein localises to the cell membrane. Its function is as follows. ATP-dependent serine protease that mediates the selective degradation of mutant and abnormal proteins as well as certain short-lived regulatory proteins. Degrades polypeptides processively. The sequence is that of Archaeal Lon protease from Thermoplasma volcanium (strain ATCC 51530 / DSM 4299 / JCM 9571 / NBRC 15438 / GSS1).